A 308-amino-acid polypeptide reads, in one-letter code: Elongation factor Ts (308 aa).

Positions 80–83 (TDFV) are involved in Mg(2+) ion dislocation from EF-Tu.

This sequence belongs to the EF-Ts family.

The protein localises to the cytoplasm. Functionally, associates with the EF-Tu.GDP complex and induces the exchange of GDP to GTP. It remains bound to the aminoacyl-tRNA.EF-Tu.GTP complex up to the GTP hydrolysis stage on the ribosome. This is Elongation factor Ts from Rhodopseudomonas palustris (strain BisB5).